A 358-amino-acid polypeptide reads, in one-letter code: MGAWRNTRFIRSLSSVKRYRARFSYYSLFGGEPRACMAEKRSRSPLPAQRQIHVHNRQQEAQLLQSAKNVIPSLEETFHKGVAGRIGVIGGCQEYTGAPYFAAISALKTGADLSHVFCTSDSASVIKSYSPELIVHPLLDRTFAVNEISEWLSRLHCLVVGPGLGRNPTNLENAKRTIEKARKNKKHLVIDADGIAVVTTYPEIIKNYDSKKSKVILTPNVVEFDRLYTSVMGKAADPHGDSYEQARSLSQELGNVTICRKGQHDIITDGQTVVECSITGSNRRCGGQGDLLSGSMAVFLHWANIEVTQNPALVAAYAASGLTRWCNRLAYSRLKRSMTTSDMIQQIHQAFEELFGKE.

A YjeF C-terminal domain is found at 63–354 (LLQSAKNVIP…QQIHQAFEEL (292 aa)). (6S)-NADPHX contacts are provided by residues Gly163 and 220 to 226 (NVVEFDR). ATP contacts are provided by residues 261–265 (KGQHD) and 280–289 (GSNRRCGGQG). Asp290 is a binding site for (6S)-NADPHX.

Belongs to the NnrD/CARKD family. Requires Mg(2+) as cofactor.

It carries out the reaction (6S)-NADHX + ATP = ADP + phosphate + NADH + H(+). The catalysed reaction is (6S)-NADPHX + ATP = ADP + phosphate + NADPH + H(+). Functionally, catalyzes the dehydration of the S-form of NAD(P)HX at the expense of ATP, which is converted to ADP. Together with NAD(P)HX epimerase, which catalyzes the epimerization of the S- and R-forms, the enzyme allows the repair of both epimers of NAD(P)HX, a damaged form of NAD(P)H that is a result of enzymatic or heat-dependent hydration. This chain is ATP-dependent (S)-NAD(P)H-hydrate dehydratase, found in Nematostella vectensis (Starlet sea anemone).